The chain runs to 1118 residues: Isoleucine--tRNA ligase (1118 aa).

A 'HIGH' region motif is present at residues 64–74; that stretch reads PFANGLPHYGH. A 'KMSKS' region motif is present at residues 647-651; sequence KLSKR. Lysine 650 lines the ATP pocket.

The protein belongs to the class-I aminoacyl-tRNA synthetase family. IleS type 2 subfamily. Monomer. It depends on Zn(2+) as a cofactor.

The protein resides in the cytoplasm. It carries out the reaction tRNA(Ile) + L-isoleucine + ATP = L-isoleucyl-tRNA(Ile) + AMP + diphosphate. Functionally, catalyzes the attachment of isoleucine to tRNA(Ile). As IleRS can inadvertently accommodate and process structurally similar amino acids such as valine, to avoid such errors it has two additional distinct tRNA(Ile)-dependent editing activities. One activity is designated as 'pretransfer' editing and involves the hydrolysis of activated Val-AMP. The other activity is designated 'posttransfer' editing and involves deacylation of mischarged Val-tRNA(Ile). The protein is Isoleucine--tRNA ligase of Ehrlichia ruminantium (strain Gardel).